We begin with the raw amino-acid sequence, 1292 residues long: Myosin-1 (1292 aa).

Positions 35–714 (VGVSDLTLLS…TLFALENMRD (680 aa)) constitute a Myosin motor domain. 128–135 (GESGAGKT) is an ATP binding site. Serine 356 carries the post-translational modification Phosphoserine. Residues 403–485 (SIGILDIYGF…PGIFAALNDS (83 aa)) are actin-binding. IQ domains lie at 718–738 (HNMA…RIDS) and 739–764 (AIRI…YGNK). A TH1 domain is found at 770 to 960 (KERRAMSLLG…TIMVRRGRPG (191 aa)). 3 disordered regions span residues 956 to 991 (RGRP…GHPT), 1017 to 1180 (YSLN…FPLK), and 1227 to 1258 (PVAS…SAAT). The segment covering 1062 to 1081 (MDNSSAAYGNASALPNSAPS) has biased composition (polar residues). Pro residues-rich tracts occupy residues 1087-1121 (ASRP…PMPR) and 1142-1155 (APPP…PPAA). The 63-residue stretch at 1157–1219 (PSEPVYEAAF…PTAYIVESKA (63 aa)) folds into the SH3 domain. The segment covering 1240–1258 (ATREAGTTSAATAAASAAT) has biased composition (low complexity).

Belongs to the TRAFAC class myosin-kinesin ATPase superfamily. Myosin family. Phosphorylation of the TEDS site (Ser-356) is required for the polarization of the actin cytoskeleton. Phosphorylation probably activates the myosin-I ATPase activity.

The protein localises to the cytoplasm. Its subcellular location is the cytoskeleton. The protein resides in the actin patch. Type-I myosin implicated in the organization of the actin cytoskeleton. Required for proper actin cytoskeleton polarization. At the cell cortex, assembles in patch-like structures together with proteins from the actin-polymerizing machinery and promotes actin assembly. Functions as actin nucleation-promoting factor (NPF) for the Arp2/3 complex. This Eremothecium gossypii (strain ATCC 10895 / CBS 109.51 / FGSC 9923 / NRRL Y-1056) (Yeast) protein is Myosin-1 (MYO1).